A 471-amino-acid chain; its full sequence is Glutamyl-tRNA(Gln) amidotransferase subunit A, mitochondrial (471 aa).

Residues lysine 64 and serine 141 each act as charge relay system in the active site. The active-site Acyl-ester intermediate is serine 165.

The protein belongs to the amidase family. GatA subfamily. Subunit of the heterotrimeric GatCAB amidotransferase (AdT) complex, composed of A, B and C subunits.

It localises to the mitochondrion. It catalyses the reaction L-glutamyl-tRNA(Gln) + L-glutamine + ATP + H2O = L-glutaminyl-tRNA(Gln) + L-glutamate + ADP + phosphate + H(+). Functionally, allows the formation of correctly charged Gln-tRNA(Gln) through the transamidation of misacylated Glu-tRNA(Gln) in the mitochondria. The reaction takes place in the presence of glutamine and ATP through an activated gamma-phospho-Glu-tRNA(Gln). The sequence is that of Glutamyl-tRNA(Gln) amidotransferase subunit A, mitochondrial from Schizosaccharomyces pombe (strain 972 / ATCC 24843) (Fission yeast).